Here is an 881-residue protein sequence, read N- to C-terminus: Tyrosine-protein kinase receptor TYRO3 (881 aa).

An N-terminal signal peptide occupies residues 1–28; sequence MVNPGPPGLIAGLLLAALSLSSVDGTKA. 2 consecutive Ig-like C2-type domains span residues 29–114 and 125–206; these read LGFV…KSVS and PYFT…AIVE. The Extracellular segment spans residues 29–414; it reads LGFVGHGYNM…QRHPHTRMSW (386 aa). N-linked (GlcNAc...) asparagine glycans are attached at residues Asn-37 and Asn-49. Cysteines 50 and 103 form a disulfide. A glycan (N-linked (GlcNAc...) asparagine) is linked at Asn-143. Cys-146 and Cys-189 form a disulfide bridge. Fibronectin type-III domains lie at 213–306 and 311–401; these read PPFN…TKEK and IPQN…SKEE. Residues Asn-216, Asn-279, Asn-351, and Asn-365 are each glycosylated (N-linked (GlcNAc...) asparagine). The helical transmembrane segment at 415 to 435 threads the bilayer; the sequence is VPMVLGILTALVTVVAMTLIF. Residues 436–881 are Cytoplasmic-facing; the sequence is LRKGRKETRF…MQEEQVVITL (446 aa). A Protein kinase domain is found at 503–774; that stretch reads FTLGRTLGKG…VDLKRRLEAI (272 aa). ATP is bound by residues 509-517 and Lys-535; that span reads LGKGEFGSV. The active-site Proton acceptor is Asp-640. Tyr-671 carries the phosphotyrosine; by autocatalysis modification. A disordered region spans residues 846–881; that stretch reads EWSSSAQNGEARGLLHEEEEEEEEEEMQEEQVVITL. Residues 862-874 are compositionally biased toward acidic residues; it reads EEEEEEEEEEMQE.

It belongs to the protein kinase superfamily. Tyr protein kinase family. AXL/UFO subfamily. Tyrosine phosphorylated upon receptor stimulation.

It localises to the cell membrane. The enzyme catalyses L-tyrosyl-[protein] + ATP = O-phospho-L-tyrosyl-[protein] + ADP + H(+). Its function is as follows. May be involved in cell adhesion processes, particularly in the central nervous system. This is Tyrosine-protein kinase receptor TYRO3 (tyro3) from Xenopus tropicalis (Western clawed frog).